A 605-amino-acid polypeptide reads, in one-letter code: Elongation factor 4 (605 aa).

Residues Asp-9 to Val-191 enclose the tr-type G domain. GTP contacts are provided by residues Asp-21–Thr-26 and Asn-138–Asp-141.

Belongs to the TRAFAC class translation factor GTPase superfamily. Classic translation factor GTPase family. LepA subfamily.

The protein localises to the cell inner membrane. The enzyme catalyses GTP + H2O = GDP + phosphate + H(+). Functionally, required for accurate and efficient protein synthesis under certain stress conditions. May act as a fidelity factor of the translation reaction, by catalyzing a one-codon backward translocation of tRNAs on improperly translocated ribosomes. Back-translocation proceeds from a post-translocation (POST) complex to a pre-translocation (PRE) complex, thus giving elongation factor G a second chance to translocate the tRNAs correctly. Binds to ribosomes in a GTP-dependent manner. The polypeptide is Elongation factor 4 (Chlorobium phaeobacteroides (strain BS1)).